The chain runs to 431 residues: Enolase (431 aa).

Gln162 is a binding site for (2R)-2-phosphoglycerate. Glu204 serves as the catalytic Proton donor. 3 residues coordinate Mg(2+): Asp241, Glu284, and Asp311. 4 residues coordinate (2R)-2-phosphoglycerate: Lys336, Arg365, Ser366, and Lys387. The active-site Proton acceptor is the Lys336.

Belongs to the enolase family. The cofactor is Mg(2+).

The protein localises to the cytoplasm. It is found in the secreted. The protein resides in the cell surface. It carries out the reaction (2R)-2-phosphoglycerate = phosphoenolpyruvate + H2O. The protein operates within carbohydrate degradation; glycolysis; pyruvate from D-glyceraldehyde 3-phosphate: step 4/5. In terms of biological role, catalyzes the reversible conversion of 2-phosphoglycerate (2-PG) into phosphoenolpyruvate (PEP). It is essential for the degradation of carbohydrates via glycolysis. The sequence is that of Enolase from Sorangium cellulosum (strain So ce56) (Polyangium cellulosum (strain So ce56)).